The chain runs to 354 residues: Inactive ADP-ribosyltransferase ARH2 (354 aa).

S27 is subject to Phosphoserine.

Belongs to the ADP-ribosylglycohydrolase family.

The protein localises to the cytoplasm. Its subcellular location is the myofibril. It localises to the sarcomere. In terms of biological role, required for myofibril assembly and outgrowth of the cardiac chambers in the developing heart. Appears to be catalytically inactive, showing no activity against O-acetyl-ADP-ribose. This is Inactive ADP-ribosyltransferase ARH2 (ADPRHL1) from Bos taurus (Bovine).